The chain runs to 496 residues: Putative aldehyde dehydrogenase-like protein C922.07c (496 aa).

241–246 (GSTKVG) lines the NAD(+) pocket. Residue E263 is the Proton acceptor of the active site. C297 serves as the catalytic Nucleophile.

The protein belongs to the aldehyde dehydrogenase family.

It localises to the cytoplasm. Its subcellular location is the nucleus. The chain is Putative aldehyde dehydrogenase-like protein C922.07c from Schizosaccharomyces pombe (strain 972 / ATCC 24843) (Fission yeast).